The sequence spans 515 residues: UPF0053 protein BUsg_314 (515 aa).

The next 7 membrane-spanning stretches (helical) occupy residues 14–34 (LTLV…VAIL), 49–69 (IGLG…SWVV), 79–99 (NFFS…FLLF), 125–145 (FWAV…DAII), 150–170 (MVNQ…LMLL), 185–205 (VVVL…AEAL), and 207–227 (FYIP…IEIF). CBS domains lie at 309–368 (MTPR…NIDV) and 372–432 (ASQI…DADE).

This sequence belongs to the UPF0053 family.

The protein localises to the cell membrane. The polypeptide is UPF0053 protein BUsg_314 (Buchnera aphidicola subsp. Schizaphis graminum (strain Sg)).